The following is a 141-amino-acid chain: MARSITMQQRIEFGDCDPAGIVWFPNYHRWLDAASRNYFIKCGLPPWRQTVVERGIVGTPIVSCNASFVCTASYDDVLTIETCIKEWRRKSFVQRHSVSRTTPGGDVQLVMRADEIRVFAMNDGERLRAIEVPADYIELCS.

Asp-17 is a catalytic residue. Residues Trp-47, 59 to 61, and Lys-90 contribute to the substrate site; that span reads TPI.

This sequence belongs to the 4-hydroxybenzoyl-CoA thioesterase family. Homotetramer.

The enzyme catalyses 4-hydroxybenzoyl-CoA + H2O = 4-hydroxybenzoate + CoA + H(+). The protein operates within xenobiotic degradation; 4-chlorobenzoate degradation; 4-hydroxybenzoate from 4-chlorobenzoate: step 3/3. Unaffected by EDTA, Mg(2+), Mn(2+), Fe(2+), Ca(2+), Co(2+) and Zn(2+). Its function is as follows. Hydrolyzes 4-hydroxybenzoate-CoA, and to a lesser extent benzoyl-CoA and 4-chlorobenzoate-CoA. Not active against aliphatic acyl-CoA thioesters, including palmitoyl-CoA, hexanoyl-CoA and acetyl-CoA. The protein is 4-hydroxybenzoyl-CoA thioesterase of Pseudomonas sp. (strain CBS-3).